The chain runs to 556 residues: Guanine nucleotide-binding protein-like 3 homolog (556 aa).

Residues 29–50 (NRKVKKEAKKNGTTNKKEKTIS) are disordered. Residues 58–95 (KEEILVQAEQEREKIKVRQEAAKEAAKIHRIEKRKNNL) adopt a coiled-coil conformation. Residues 138–317 (ASEVRKTVEI…LIDSPGVILV (180 aa)) enclose the CP-type G domain. Residues 184–187 (NKID), 266–273 (GFPNVGKS), and 310–313 (DSPG) contribute to the GTP site. 2 disordered regions span residues 461–508 (APHN…PESL) and 525–556 (KKQK…AMEM). A compositionally biased stretch (acidic residues) spans 466-478 (DEEEDDDDEMETD). Residues 525–535 (KKQKKKSKKTA) show a composition bias toward basic residues.

The protein belongs to the TRAFAC class YlqF/YawG GTPase family.

It localises to the nucleus. Its function is as follows. May play a role in regulating cellular proliferation in both germline and somatic tissues. This is Guanine nucleotide-binding protein-like 3 homolog from Caenorhabditis elegans.